We begin with the raw amino-acid sequence, 286 residues long: Foldase protein PrsA 1 (286 aa).

The N-terminal stretch at methionine 1–alanine 18 is a signal peptide. Cysteine 19 is lipidated: N-palmitoyl cysteine. Cysteine 19 carries the S-diacylglycerol cysteine lipid modification. Residues lysine 130–aspartate 220 form the PpiC domain.

This sequence belongs to the PrsA family.

The protein localises to the cell membrane. It catalyses the reaction [protein]-peptidylproline (omega=180) = [protein]-peptidylproline (omega=0). In terms of biological role, plays a major role in protein secretion by helping the post-translocational extracellular folding of several secreted proteins. The sequence is that of Foldase protein PrsA 1 (prsA1) from Bacillus cereus (strain ATCC 14579 / DSM 31 / CCUG 7414 / JCM 2152 / NBRC 15305 / NCIMB 9373 / NCTC 2599 / NRRL B-3711).